The following is a 212-amino-acid chain: Ras-related protein Rab-21 (212 aa).

Residues 14–21 (GEGCVGKT), 62–66 (DTAGQ), and 120–123 (NKCD) contribute to the GTP site. The segment at 181–212 (TNTTGQTTNRSERIPIVPDSDSGNKQPGCCSN) is disordered. Polar residues predominate over residues 201–212 (DSGNKQPGCCSN). 2 S-geranylgeranyl cysteine lipidation sites follow: cysteine 209 and cysteine 210.

It belongs to the small GTPase superfamily. Rab family. In terms of assembly, interacts with LIM domain proteins limF and ChLim.

The protein resides in the cell membrane. Involved in the regulation of phagocytosis. This is Ras-related protein Rab-21 (rab21) from Dictyostelium discoideum (Social amoeba).